We begin with the raw amino-acid sequence, 667 residues long: Mediator of RNA polymerase II transcription subunit 17 (667 aa).

A coiled-coil region spans residues 172–197 (KRRALQEAVQVLDMAQKQRQRASSNL).

The protein belongs to the Mediator complex subunit 17 family. In terms of assembly, component of the Mediator complex.

The protein resides in the nucleus. Functionally, component of the Mediator complex, a coactivator involved in regulated gene transcription of nearly all RNA polymerase II-dependent genes. Mediator functions as a bridge to convey information from gene-specific regulatory proteins to the basal RNA polymerase II transcription machinery. Mediator is recruited to promoters by direct interactions with regulatory proteins and serves as a scaffold for the assembly of a functional preinitiation complex with RNA polymerase II and the general transcription factors. The polypeptide is Mediator of RNA polymerase II transcription subunit 17 (mdt-17) (Caenorhabditis elegans).